The chain runs to 263 residues: Hydroxyethylthiazole kinase (263 aa).

Met-39 provides a ligand contact to substrate. ATP is bound by residues Lys-115 and Thr-160. Gly-187 serves as a coordination point for substrate.

This sequence belongs to the Thz kinase family. It depends on Mg(2+) as a cofactor.

It carries out the reaction 5-(2-hydroxyethyl)-4-methylthiazole + ATP = 4-methyl-5-(2-phosphooxyethyl)-thiazole + ADP + H(+). The protein operates within cofactor biosynthesis; thiamine diphosphate biosynthesis; 4-methyl-5-(2-phosphoethyl)-thiazole from 5-(2-hydroxyethyl)-4-methylthiazole: step 1/1. Its function is as follows. Catalyzes the phosphorylation of the hydroxyl group of 4-methyl-5-beta-hydroxyethylthiazole (THZ). This is Hydroxyethylthiazole kinase from Staphylococcus aureus (strain JH9).